Reading from the N-terminus, the 514-residue chain is Deoxynucleoside triphosphate triphosphohydrolase SAMHD1 homolog (514 aa).

The interval 1–24 (MNNTFKYVNEDVSGTEGEESDYDP) is disordered. Residue Lys-80 coordinates GTP. A 2'-deoxyribonucleoside 5'-triphosphate is bound at residue Asn-83. Residue 101-109 (DTEQFQRLR) coordinates GTP. Substrate is bound by residues Gln-113 and Arg-128. Residues 128–259 (RFEHSIGVSH…SVDVDKFDYL (132 aa)) form the HD domain. Zn(2+)-binding residues include His-131, His-170, and Asp-171. Residue His-174 participates in substrate binding. The active site involves His-196. Substrate is bound by residues 252 to 258 (DVDKFDY), Tyr-258, and Asp-262. Asp-254 is a binding site for Zn(2+). A 2'-deoxyribonucleoside 5'-triphosphate-binding positions include Arg-276, 291–293 (LSK), and Asn-297. Residues Arg-305 and 309-314 (HKLVYT) each bind substrate. The a 2'-deoxyribonucleoside 5'-triphosphate site is built by His-315 and Lys-316. GTP-binding residues include Arg-380 and Lys-384.

The protein belongs to the SAMHD1 family. In terms of assembly, homodimer; in absence of GTP and dNTP. Homotetramer; in GTP- and dNTP-bound form. Zn(2+) serves as cofactor.

The catalysed reaction is a 2'-deoxyribonucleoside 5'-triphosphate + H2O = a 2'-deoxyribonucleoside + triphosphate + H(+). With respect to regulation, allosterically activated and regulated via the combined actions of GTP and dNTPs (dATP, dGTP, dTTP and dCTP): Allosteric site 1 binds GTP, while allosteric site 2 binds dNTP. Allosteric activation promotes the formation of highly active homotetramers. Functionally, has deoxynucleoside triphosphate (dNTPase) activity. This is Deoxynucleoside triphosphate triphosphohydrolase SAMHD1 homolog from Dictyostelium discoideum (Social amoeba).